The sequence spans 38 residues: Cytochrome b6-f complex subunit 5 (38 aa).

A helical membrane pass occupies residues 5 to 25; that stretch reads LLSGIVLGLIPITLAGLFVTA.

It belongs to the PetG family. The 4 large subunits of the cytochrome b6-f complex are cytochrome b6, subunit IV (17 kDa polypeptide, PetD), cytochrome f and the Rieske protein, while the 4 small subunits are PetG, PetL, PetM and PetN. The complex functions as a dimer.

The protein localises to the plastid. The protein resides in the chloroplast thylakoid membrane. Its function is as follows. Component of the cytochrome b6-f complex, which mediates electron transfer between photosystem II (PSII) and photosystem I (PSI), cyclic electron flow around PSI, and state transitions. PetG is required for either the stability or assembly of the cytochrome b6-f complex. This Adiantum capillus-veneris (Maidenhair fern) protein is Cytochrome b6-f complex subunit 5.